We begin with the raw amino-acid sequence, 299 residues long: Biotin synthase (299 aa).

Positions 22-252 constitute a Radical SAM core domain; sequence TSNLKLDLCS…NVTIKIAAGR (231 aa). Residues Cys-40, Cys-44, and Cys-47 each contribute to the [4Fe-4S] cluster site. Residues Cys-116, Cys-176, and Lys-247 each contribute to the [2Fe-2S] cluster site.

This sequence belongs to the radical SAM superfamily. Biotin synthase family. Homodimer. The cofactor is [4Fe-4S] cluster. [2Fe-2S] cluster serves as cofactor.

The catalysed reaction is (4R,5S)-dethiobiotin + (sulfur carrier)-SH + 2 reduced [2Fe-2S]-[ferredoxin] + 2 S-adenosyl-L-methionine = (sulfur carrier)-H + biotin + 2 5'-deoxyadenosine + 2 L-methionine + 2 oxidized [2Fe-2S]-[ferredoxin]. The protein operates within cofactor biosynthesis; biotin biosynthesis; biotin from 7,8-diaminononanoate: step 2/2. Its function is as follows. Catalyzes the conversion of dethiobiotin (DTB) to biotin by the insertion of a sulfur atom into dethiobiotin via a radical-based mechanism. The sequence is that of Biotin synthase from Thermotoga petrophila (strain ATCC BAA-488 / DSM 13995 / JCM 10881 / RKU-1).